The primary structure comprises 594 residues: Golgi-associated RAB2 interactor protein 4 (594 aa).

Positions 387 to 524 are disordered; sequence MDAAAGPPVS…TSSGSSKGLG (138 aa). The span at 396–406 shows a compositional bias: polar residues; it reads STRQSKSSLSG. 3 stretches are compositionally biased toward basic and acidic residues: residues 408–433, 442–455, and 468–477; these read HGRE…DRAL, TGES…DKIA, and ANRDDKKEKG. The segment covering 511–520 has biased composition (polar residues); sequence SLWTTSSGSS.

Belongs to the GARIN family. Interacts (via N-terminus) with RAB2B (in GTP-bound form).

The protein localises to the golgi apparatus. RAB2B effector protein required for the compacted Golgi morphology, probably through interaction with small GTPase RAB2B. In Homo sapiens (Human), this protein is Golgi-associated RAB2 interactor protein 4.